The sequence spans 143 residues: Histone H2B (143 aa).

Residues 1–52 (MAPKPASTAGKAPASTASKAPVKSDAAKTASKSKVSSGADGEKKKRKKTRKE) are disordered. Lys11 is subject to N6-acetyllysine; alternate. Lys11 is covalently cross-linked (Glycyl lysine isopeptide (Lys-Gly) (interchain with G-Cter in SUMO); alternate). Ser15 is modified (phosphoserine). Lys19 carries the post-translational modification N6-acetyllysine. Over residues 23-39 (KSDAAKTASKSKVSSGA) the composition is skewed to low complexity. Lys137 participates in a covalent cross-link: Glycyl lysine isopeptide (Lys-Gly) (interchain with G-Cter in ubiquitin).

This sequence belongs to the histone H2B family. The nucleosome is a histone octamer containing two molecules each of H2A, H2B, H3 and H4 assembled in one H3-H4 heterotetramer and two H2A-H2B heterodimers. The octamer wraps approximately 147 bp of DNA. Post-translationally, monoubiquitinated to form H2BK123ub1. H2BK123ub1 gives a specific tag for epigenetic transcriptional activation and is also prerequisite for H3K4me and H3K79me formation. H2BK123ub1 also modulates the formation of double-strand breaks during meiosis and is a prerequisite for DNA-damage checkpoint activation. In terms of processing, phosphorylated to form H2BS10ph during progression through meiotic prophase. May be correlated with chromosome condensation. Acetylation of N-terminal lysines and particularly formation of H2BK11ac has a positive effect on transcription. Post-translationally, sumoylation to form H2BK6su occurs preferentially near the telomeres and represses gene transcription.

It localises to the nucleus. It is found in the chromosome. In terms of biological role, core component of nucleosome. Nucleosomes wrap and compact DNA into chromatin, limiting DNA accessibility to the cellular machineries which require DNA as a template. Histones thereby play a central role in transcription regulation, DNA repair, DNA replication and chromosomal stability. DNA accessibility is regulated via a complex set of post-translational modifications of histones, also called histone code, and nucleosome remodeling. This is Histone H2B (htbA) from Agaricus bisporus (White button mushroom).